The primary structure comprises 652 residues: UvrABC system protein C (652 aa).

The region spanning 19 to 96 (KTSGVYLWKD…IKKHKPRYNI (78 aa)) is the GIY-YIG domain. The UVR domain maps to 203–238 (EDVSGTLKEKMKEAAEKKEFEKAARLRDGIQAVYAL).

This sequence belongs to the UvrC family. Interacts with UvrB in an incision complex.

It localises to the cytoplasm. Its function is as follows. The UvrABC repair system catalyzes the recognition and processing of DNA lesions. UvrC both incises the 5' and 3' sides of the lesion. The N-terminal half is responsible for the 3' incision and the C-terminal half is responsible for the 5' incision. The sequence is that of UvrABC system protein C from Treponema denticola (strain ATCC 35405 / DSM 14222 / CIP 103919 / JCM 8153 / KCTC 15104).